The chain runs to 57 residues: MQPRSPVRTNIVIFTILGFVVALLIHFIVLSSPEYNWLSNAEGGALLLSAARALFGI.

Methionine 1 bears the N-formylmethionine mark. Over 1–10 the chain is Cytoplasmic; sequence MQPRSPVRTN. The chain crosses the membrane as a helical span at residues 11–30; sequence IVIFTILGFVVALLIHFIVL. Histidine 26 contacts a bacteriochlorophyll. Residues 31–57 lie on the Periplasmic side of the membrane; that stretch reads SSPEYNWLSNAEGGALLLSAARALFGI.

This sequence belongs to the antenna complex alpha subunit family. In terms of assembly, the core complex is formed by different alpha and beta chains, binding bacteriochlorophyll molecules, and arranged most probably in tetrameric structures disposed around the reaction center. The non-pigmented gamma chains may constitute additional components.

It is found in the cell membrane. Functionally, antenna complexes are light-harvesting systems, which transfer the excitation energy to the reaction centers. In Chloroflexus aurantiacus (strain ATCC 29366 / DSM 635 / J-10-fl), this protein is Light-harvesting protein B-808/866 alpha chain (puf2A).